The sequence spans 109 residues: Nucleoid-associated protein VP2178 (109 aa).

Disordered regions lie at residues 1 to 22 (MFGK…ERMQ) and 88 to 109 (QKEK…KMPF).

Belongs to the YbaB/EbfC family. In terms of assembly, homodimer.

It localises to the cytoplasm. Its subcellular location is the nucleoid. Its function is as follows. Binds to DNA and alters its conformation. May be involved in regulation of gene expression, nucleoid organization and DNA protection. The protein is Nucleoid-associated protein VP2178 of Vibrio parahaemolyticus serotype O3:K6 (strain RIMD 2210633).